The following is a 271-amino-acid chain: MSSSTLLHLLLLSSLLFSCLSCLTNVEDEFSYIEGNPNGPENWGNLKPEWETCGKGMEQSPIQLRDNRVIFDQTLGKLRRNYRAVDARLRNSGHDVLVDFKGNAGSLSINRVEYQLKRIHFHSPSEHEMNGERFDLEAQLVHESQDQKRAVVSILFRFGRADPFLSDLEDFIKQFSNSQKNEINAGVVDPNQLQIDDSAYYRYMGSFTAPPCTEGISWTVMRKVATVSPRQVLLLKQAVNENAINNARPLQPTNFRSVFYFEQLKSKLGVI.

The signal sequence occupies residues Met-1 to Ser-21. Positions Asp-28–Glu-262 constitute an Alpha-carbonic anhydrase domain. Cysteines 53 and 212 form a disulfide. His-94 serves as the catalytic Proton acceptor. L-ascorbate contacts are provided by residues Asp-95, His-120 to His-122, Gln-139, and Thr-208 to Ala-209.

It belongs to the alpha-carbonic anhydrase family. Monomer. Homodimer. In terms of processing, not glycosylated. Expressed in tuber (at protein level).

It catalyses the reaction hydrogencarbonate + H(+) = CO2 + H2O. The catalysed reaction is 2 monodehydro-L-ascorbate radical + NADH + H(+) = 2 L-ascorbate + NAD(+). With respect to regulation, the carbonate dehydratase activity is not substantially changed by the addition of Zn(2+). Functionally, storage protein of tuber. Involved in protection against oxidative stress. Has carbonate dehydratase, trypsin inhibitor, dehydroascorbate (DHA) reductase and monodehydroascorbate (MDA) reductase activities. Catalyzes the reactions of carbonate dehydratase and DHA reductase independently of zinc and glutathione (GSH). The coupled reaction is capable of recycling a plant antioxidant ascorbate using ubiquitous compounds H(2)O and CO(2). Exhibits antioxidant activity. Able to scavenge 1,1-diphenyl-2-picrylhydrazyl (DPPH) radical. Exhibits immunomodulatory activity. Activates Toll-like receptor 4 signaling pathways by up-regulating the gene expression of pro-inflammatory cytokines, such as tumor necrosis factor alpha, interleukin-1 beta and interleukin-6, and chemokines RANTES and MCP-1, in mouse RAW 264.7 macrophages. Stimulates the phagocytosis of E.coli by the LPS-treated mouse macrophages. The polypeptide is Dioscorin dioA3 (Dioscorea japonica (Japanese yam)).